The sequence spans 478 residues: tRNA (guanine(10)-N(2))-methyltransferase TRMT11 (478 aa).

The interval 457–478 is disordered; the sequence is EERARSEMANAENVKSKGKEDV.

It belongs to the class I-like SAM-binding methyltransferase superfamily. TRM11 methyltransferase family. As to quaternary structure, part of the heterodimeric TRMT11-TRM112 methyltransferase complex; this complex forms an active tRNA methyltransferase, where TRMT112 acts as an activator of the catalytic subunit TRMT11.

Its subcellular location is the cytoplasm. The enzyme catalyses guanosine(10) in tRNA + S-adenosyl-L-methionine = N(2)-methylguanosine(10) in tRNA + S-adenosyl-L-homocysteine + H(+). Catalytic subunit of the TRMT11-TRM112 methyltransferase complex, that specifically mediates the S-adenosyl-L-methionine-dependent N(2)-methylation of guanosine nucleotide at position 10 (m2G10) in tRNAs. This is one of the major tRNA (guanine-N(2))-methyltransferases. The sequence is that of tRNA (guanine(10)-N(2))-methyltransferase TRMT11 (trmt11.L) from Xenopus laevis (African clawed frog).